The chain runs to 75 residues: MITSGVEPKDLAKRGESLIRQSSNRYLTTVRIAFRAKQRRFDDFDGLLEESSVKPVQRAIVELSDEQDQPDLLPG.

The protein belongs to the RNA polymerase subunit omega family. In terms of assembly, in cyanobacteria the RNAP catalytic core is composed of 2 alpha, 1 beta, 1 beta', 1 gamma and 1 omega subunit. When a sigma factor is associated with the core the holoenzyme is formed, which can initiate transcription.

It carries out the reaction RNA(n) + a ribonucleoside 5'-triphosphate = RNA(n+1) + diphosphate. Functionally, promotes RNA polymerase assembly. Latches the N- and C-terminal regions of the beta' subunit thereby facilitating its interaction with the beta and alpha subunits. The sequence is that of DNA-directed RNA polymerase subunit omega from Prochlorococcus marinus (strain MIT 9313).